The primary structure comprises 157 residues: Nucleoside diphosphate kinase (157 aa).

Positions 12, 60, 88, 94, and 105 each coordinate ATP. Histidine 121 functions as the Pros-phosphohistidine intermediate in the catalytic mechanism.

Belongs to the NDK family. Mg(2+) is required as a cofactor.

Its subcellular location is the cytoplasm. It catalyses the reaction a 2'-deoxyribonucleoside 5'-diphosphate + ATP = a 2'-deoxyribonucleoside 5'-triphosphate + ADP. The enzyme catalyses a ribonucleoside 5'-diphosphate + ATP = a ribonucleoside 5'-triphosphate + ADP. In terms of biological role, major role in the synthesis of nucleoside triphosphates other than ATP. The ATP gamma phosphate is transferred to the NDP beta phosphate via a ping-pong mechanism, using a phosphorylated active-site intermediate. The polypeptide is Nucleoside diphosphate kinase (Pyrococcus horikoshii (strain ATCC 700860 / DSM 12428 / JCM 9974 / NBRC 100139 / OT-3)).